Here is a 607-residue protein sequence, read N- to C-terminus: Guanine nucleotide-binding protein-like 1 (607 aa).

Basic residues predominate over residues Met1–Lys14. Residues Met1–Tyr81 are disordered. A compositionally biased stretch (basic and acidic residues) spans Gln15–Leu26. Ser32, Ser33, and Ser34 each carry phosphoserine. 2 positions are modified to phosphothreonine: Thr48 and Thr50. Phosphoserine is present on residues Ser51 and Ser68. A CP-type G domain is found at Trp178–Pro418. Residue Asn225–Asp228 coordinates GTP. Position 324 is a phosphoserine (Ser324). GTP-binding positions include Gly367–Ser374 and Asp411–Leu415. Residues Gly544–Cys607 form a disordered region. The span at Gly550–Pro585 shows a compositional bias: acidic residues. Residues Ser561, Ser562, and Ser563 each carry the phosphoserine modification.

It belongs to the TRAFAC class YlqF/YawG GTPase family.

Functionally, possible regulatory or functional link with the histocompatibility cluster. The polypeptide is Guanine nucleotide-binding protein-like 1 (Gnl1) (Rattus norvegicus (Rat)).